A 49-amino-acid polypeptide reads, in one-letter code: MRVGVTLACTECKRRNYTTTKNKKNDPNRIEMKKYCRFCQTHTLHKETR.

It belongs to the bacterial ribosomal protein bL33 family.

This chain is Large ribosomal subunit protein bL33, found in Pelotomaculum thermopropionicum (strain DSM 13744 / JCM 10971 / SI).